The chain runs to 845 residues: Probable inorganic carbon transporter subunit DabA (845 aa).

The segment at 1 to 20 (MPMASGDESMSARSENPVQS) is disordered. Positions 345, 347, 516, and 531 each coordinate Zn(2+).

The protein belongs to the inorganic carbon transporter (TC 9.A.2) DabA family. In terms of assembly, forms a complex with DabB. Zn(2+) serves as cofactor.

It localises to the cell inner membrane. Part of an energy-coupled inorganic carbon pump. This is Probable inorganic carbon transporter subunit DabA from Azotobacter vinelandii (strain DJ / ATCC BAA-1303).